The sequence spans 127 residues: Fluoride-specific ion channel FluC (127 aa).

4 helical membrane passes run Ser-4–Leu-24, Gly-36–Ala-56, Leu-68–Val-88, and Ala-99–Phe-119. Na(+) contacts are provided by Gly-75 and Thr-78.

This sequence belongs to the fluoride channel Fluc/FEX (TC 1.A.43) family.

The protein resides in the cell inner membrane. It catalyses the reaction fluoride(in) = fluoride(out). Na(+) is not transported, but it plays an essential structural role and its presence is essential for fluoride channel function. Functionally, fluoride-specific ion channel. Important for reducing fluoride concentration in the cell, thus reducing its toxicity. This chain is Fluoride-specific ion channel FluC, found in Pseudomonas aeruginosa (strain UCBPP-PA14).